Here is a 346-residue protein sequence, read N- to C-terminus: Protein RecA (346 aa).

G65–T72 lines the ATP pocket.

Belongs to the RecA family.

Its subcellular location is the cytoplasm. In terms of biological role, can catalyze the hydrolysis of ATP in the presence of single-stranded DNA, the ATP-dependent uptake of single-stranded DNA by duplex DNA, and the ATP-dependent hybridization of homologous single-stranded DNAs. It interacts with LexA causing its activation and leading to its autocatalytic cleavage. In Pseudomonas aeruginosa (strain UCBPP-PA14), this protein is Protein RecA.